A 787-amino-acid chain; its full sequence is Protein translocase subunit SecA (787 aa).

ATP-binding positions include Gln85, 103–107 (GEGKT), and Asp492.

This sequence belongs to the SecA family. In terms of assembly, monomer and homodimer. Part of the essential Sec protein translocation apparatus which comprises SecA, SecYEG and auxiliary proteins SecDF. Other proteins may also be involved.

It localises to the cell membrane. The protein localises to the cytoplasm. The catalysed reaction is ATP + H2O + cellular proteinSide 1 = ADP + phosphate + cellular proteinSide 2.. In terms of biological role, part of the Sec protein translocase complex. Interacts with the SecYEG preprotein conducting channel. Has a central role in coupling the hydrolysis of ATP to the transfer of proteins into and across the cell membrane, serving as an ATP-driven molecular motor driving the stepwise translocation of polypeptide chains across the membrane. The polypeptide is Protein translocase subunit SecA (Lacticaseibacillus casei (strain BL23) (Lactobacillus casei)).